The chain runs to 200 residues: Ras-related protein RHN1 (200 aa).

GTP-binding positions include 17–25, 36–42, 65–69, 123–126, and 153–155; these read GDMGAGKSS, LEFQEST, DTAGQ, NKAD, and SAK. Positions 39–47 match the Effector region motif; the sequence is QESTIGAAF. S-geranylgeranyl cysteine attachment occurs at residues cysteine 198 and cysteine 199.

This sequence belongs to the small GTPase superfamily. Rab family. As to expression, high in stem, root, and inflorescence.

It is found in the cell membrane. In terms of biological role, protein transport. Probably involved in vesicular traffic. This is Ras-related protein RHN1 (RHN1) from Nicotiana plumbaginifolia (Leadwort-leaved tobacco).